The following is a 432-amino-acid chain: Enolase (432 aa).

Q167 lines the (2R)-2-phosphoglycerate pocket. E209 serves as the catalytic Proton donor. Mg(2+) is bound by residues D246, E291, and D318. The (2R)-2-phosphoglycerate site is built by K343, R372, S373, and K394. K343 serves as the catalytic Proton acceptor.

Belongs to the enolase family. As to quaternary structure, component of the RNA degradosome, a multiprotein complex involved in RNA processing and mRNA degradation. The cofactor is Mg(2+).

The protein resides in the cytoplasm. Its subcellular location is the secreted. The protein localises to the cell surface. It carries out the reaction (2R)-2-phosphoglycerate = phosphoenolpyruvate + H2O. The protein operates within carbohydrate degradation; glycolysis; pyruvate from D-glyceraldehyde 3-phosphate: step 4/5. Functionally, catalyzes the reversible conversion of 2-phosphoglycerate (2-PG) into phosphoenolpyruvate (PEP). It is essential for the degradation of carbohydrates via glycolysis. In Buchnera aphidicola subsp. Cinara cedri (strain Cc), this protein is Enolase.